Reading from the N-terminus, the 247-residue chain is tRNA pseudouridine synthase A (247 aa).

Asp53 functions as the Nucleophile in the catalytic mechanism. Tyr111 contributes to the substrate binding site.

The protein belongs to the tRNA pseudouridine synthase TruA family. As to quaternary structure, homodimer.

The enzyme catalyses uridine(38/39/40) in tRNA = pseudouridine(38/39/40) in tRNA. Functionally, formation of pseudouridine at positions 38, 39 and 40 in the anticodon stem and loop of transfer RNAs. The polypeptide is tRNA pseudouridine synthase A (Bacillus pumilus (strain SAFR-032)).